The following is a 432-amino-acid chain: Glutamyl-tRNA reductase (432 aa).

Residues 55–58 (TCNR), serine 113, 118–120 (EAQ), and glutamine 124 each bind substrate. Cysteine 56 functions as the Nucleophile in the catalytic mechanism. 193–198 (GAGEMI) contacts NADP(+).

Belongs to the glutamyl-tRNA reductase family. As to quaternary structure, homodimer.

It carries out the reaction (S)-4-amino-5-oxopentanoate + tRNA(Glu) + NADP(+) = L-glutamyl-tRNA(Glu) + NADPH + H(+). The protein operates within porphyrin-containing compound metabolism; protoporphyrin-IX biosynthesis; 5-aminolevulinate from L-glutamyl-tRNA(Glu): step 1/2. Catalyzes the NADPH-dependent reduction of glutamyl-tRNA(Glu) to glutamate 1-semialdehyde (GSA). The chain is Glutamyl-tRNA reductase from Paracidovorax citrulli (strain AAC00-1) (Acidovorax citrulli).